Reading from the N-terminus, the 869-residue chain is Leucine--tRNA ligase (869 aa).

Positions 42-52 (PYPSGNLHMGH) match the 'HIGH' region motif. Positions 622 to 626 (KMSKS) match the 'KMSKS' region motif. Lys625 contacts ATP.

This sequence belongs to the class-I aminoacyl-tRNA synthetase family.

The protein localises to the cytoplasm. It carries out the reaction tRNA(Leu) + L-leucine + ATP = L-leucyl-tRNA(Leu) + AMP + diphosphate. The polypeptide is Leucine--tRNA ligase (Synechocystis sp. (strain ATCC 27184 / PCC 6803 / Kazusa)).